Reading from the N-terminus, the 573-residue chain is DNA ligase (573 aa).

Glu250 serves as a coordination point for ATP. Catalysis depends on Lys252, which acts as the N6-AMP-lysine intermediate. ATP-binding residues include Arg257, Arg272, Glu301, Phe342, Arg432, and Lys438.

Belongs to the ATP-dependent DNA ligase family. It depends on Mg(2+) as a cofactor.

The enzyme catalyses ATP + (deoxyribonucleotide)n-3'-hydroxyl + 5'-phospho-(deoxyribonucleotide)m = (deoxyribonucleotide)n+m + AMP + diphosphate.. In terms of biological role, DNA ligase that seals nicks in double-stranded DNA during DNA replication, DNA recombination and DNA repair. The polypeptide is DNA ligase (Methanococcus vannielii (strain ATCC 35089 / DSM 1224 / JCM 13029 / OCM 148 / SB)).